The primary structure comprises 454 residues: Chromosomal replication initiator protein DnaA (454 aa).

Residues 1–76 form a domain I, interacts with DnaA modulators region; that stretch reads MNKLKTDLNL…IGASFRILAK (76 aa). The domain II stretch occupies residues 76-113; that stretch reads KNPKIIFAQESPGNGEKATGKKIKSLPREDKSSIFESK. The segment at 114–330 is domain III, AAA+ region; it reads GLNTKFSFEN…GALNRLCAYA (217 aa). ATP-binding residues include Gly-158, Gly-160, Lys-161, and Thr-162. Residues 331–454 form a domain IV, binds dsDNA region; it reads SIHKEGKITL…KITEQLTSSQ (124 aa).

It belongs to the DnaA family. As to quaternary structure, oligomerizes as a right-handed, spiral filament on DNA at oriC.

The protein resides in the cytoplasm. In terms of biological role, plays an essential role in the initiation and regulation of chromosomal replication. ATP-DnaA binds to the origin of replication (oriC) to initiate formation of the DNA replication initiation complex once per cell cycle. Binds the DnaA box (a 9 base pair repeat at the origin) and separates the double-stranded (ds)DNA. Forms a right-handed helical filament on oriC DNA; dsDNA binds to the exterior of the filament while single-stranded (ss)DNA is stabiized in the filament's interior. The ATP-DnaA-oriC complex binds and stabilizes one strand of the AT-rich DNA unwinding element (DUE), permitting loading of DNA polymerase. After initiation quickly degrades to an ADP-DnaA complex that is not apt for DNA replication. Binds acidic phospholipids. This Methylacidiphilum infernorum (isolate V4) (Methylokorus infernorum (strain V4)) protein is Chromosomal replication initiator protein DnaA.